Here is a 101-residue protein sequence, read N- to C-terminus: Large ribosomal subunit protein uL23c (101 aa).

Belongs to the universal ribosomal protein uL23 family. As to quaternary structure, part of the 50S ribosomal subunit.

The protein resides in the plastid. It localises to the chloroplast. Binds to 23S rRNA. The protein is Large ribosomal subunit protein uL23c (rpl23) of Cyanidium caldarium (Red alga).